The following is a 291-amino-acid chain: Ribosome biogenesis protein BRX1 (291 aa).

The region spanning 31–232 is the Brix domain; the sequence is QRTLLISSRG…VILILEGSFG (202 aa). Position 285 is a phosphoserine (Ser-285).

This sequence belongs to the BRX1 family. Part of a complex that includes BRX1, RPF1, RPF2 and SSF1 or SSF2.

Its subcellular location is the nucleus. The protein localises to the nucleolus. Its function is as follows. Required for biogenesis of the 60S ribosomal subunit. In Saccharomyces cerevisiae (strain ATCC 204508 / S288c) (Baker's yeast), this protein is Ribosome biogenesis protein BRX1 (BRX1).